The primary structure comprises 209 residues: Thiamine-phosphate synthase (209 aa).

Residues 37-41 and Asn69 contribute to the 4-amino-2-methyl-5-(diphosphooxymethyl)pyrimidine site; that span reads QYRDK. Asp70 and Asp89 together coordinate Mg(2+). Ser108 serves as a coordination point for 4-amino-2-methyl-5-(diphosphooxymethyl)pyrimidine. 135-137 is a binding site for 2-[(2R,5Z)-2-carboxy-4-methylthiazol-5(2H)-ylidene]ethyl phosphate; the sequence is SPT. Lys138 contributes to the 4-amino-2-methyl-5-(diphosphooxymethyl)pyrimidine binding site. 2-[(2R,5Z)-2-carboxy-4-methylthiazol-5(2H)-ylidene]ethyl phosphate is bound by residues Gly165 and 185–186; that span reads VS.

Belongs to the thiamine-phosphate synthase family. It depends on Mg(2+) as a cofactor.

The catalysed reaction is 2-[(2R,5Z)-2-carboxy-4-methylthiazol-5(2H)-ylidene]ethyl phosphate + 4-amino-2-methyl-5-(diphosphooxymethyl)pyrimidine + 2 H(+) = thiamine phosphate + CO2 + diphosphate. It catalyses the reaction 2-(2-carboxy-4-methylthiazol-5-yl)ethyl phosphate + 4-amino-2-methyl-5-(diphosphooxymethyl)pyrimidine + 2 H(+) = thiamine phosphate + CO2 + diphosphate. It carries out the reaction 4-methyl-5-(2-phosphooxyethyl)-thiazole + 4-amino-2-methyl-5-(diphosphooxymethyl)pyrimidine + H(+) = thiamine phosphate + diphosphate. It functions in the pathway cofactor biosynthesis; thiamine diphosphate biosynthesis; thiamine phosphate from 4-amino-2-methyl-5-diphosphomethylpyrimidine and 4-methyl-5-(2-phosphoethyl)-thiazole: step 1/1. Functionally, condenses 4-methyl-5-(beta-hydroxyethyl)thiazole monophosphate (THZ-P) and 2-methyl-4-amino-5-hydroxymethyl pyrimidine pyrophosphate (HMP-PP) to form thiamine monophosphate (TMP). The chain is Thiamine-phosphate synthase from Halorhodospira halophila (strain DSM 244 / SL1) (Ectothiorhodospira halophila (strain DSM 244 / SL1)).